Consider the following 610-residue polypeptide: Glutamine--fructose-6-phosphate aminotransferase [isomerizing] (610 aa).

The Nucleophile; for GATase activity role is filled by C2. In terms of domain architecture, Glutamine amidotransferase type-2 spans 2 to 219 (CGIVGATSER…EGDVADINRT (218 aa)). SIS domains follow at residues 287–427 (AADI…YRGM) and 459–600 (LAQD…VDQP). The For Fru-6P isomerization activity role is filled by K605.

As to quaternary structure, homodimer.

Its subcellular location is the cytoplasm. It catalyses the reaction D-fructose 6-phosphate + L-glutamine = D-glucosamine 6-phosphate + L-glutamate. In terms of biological role, catalyzes the first step in hexosamine metabolism, converting fructose-6P into glucosamine-6P using glutamine as a nitrogen source. In Idiomarina loihiensis (strain ATCC BAA-735 / DSM 15497 / L2-TR), this protein is Glutamine--fructose-6-phosphate aminotransferase [isomerizing].